A 1624-amino-acid chain; its full sequence is ATP-binding cassette sub-family A member 9 (1624 aa).

Residues 31–51 traverse the membrane as a helical segment; sequence LLEWLFSFLLVLFLYLFFSNL. Residues Asn120 and Asn195 are each glycosylated (N-linked (GlcNAc...) asparagine). 6 helical membrane-spanning segments follow: residues 221-243, 269-289, 300-320, 329-349, 354-374, and 398-418; these read VATD…YVSV, SWGL…ALIV, FVMV…LAFL, FLTG…GFPA, LPAF…TVGM, and LIIA…VLTL. One can recognise an ABC transporter 1 domain in the interval 481-716; sequence IRIKNLKKEY…WGIGYHLSLH (236 aa). ATP is bound at residue 517 to 524; the sequence is GHSGAGKT. A helical transmembrane segment spans residues 864–884; the sequence is LWTILLLFGISFIPQLLEHLF. Asn949 carries an N-linked (GlcNAc...) asparagine glycan. Helical transmembrane passes span 1026–1046, 1065–1085, 1108–1128, 1136–1156, 1163–1183, and 1200–1220; these read TFFW…SSIG, AYWF…LLLM, ILCS…ISFI, SGIW…ATDL, GLFF…LFIF, and EIVY…LFIL. One can recognise an ABC transporter 2 domain in the interval 1288 to 1521; the sequence is LRKEYAGKKK…FGKDYLLEMK (234 aa). Residue 1326-1333 coordinates ATP; sequence GHNGAGKS.

This sequence belongs to the ABC transporter superfamily. ABCA family. As to expression, widely expressed with higher expression in heart.

The protein resides in the membrane. Functionally, transporter that may play a role in monocyte differentiation and lipid transport and homeostasis. This Homo sapiens (Human) protein is ATP-binding cassette sub-family A member 9 (ABCA9).